The chain runs to 228 residues: Uracil-DNA glycosylase (228 aa).

D64 functions as the Proton acceptor in the catalytic mechanism.

The protein belongs to the uracil-DNA glycosylase (UDG) superfamily. UNG family.

The protein resides in the cytoplasm. It catalyses the reaction Hydrolyzes single-stranded DNA or mismatched double-stranded DNA and polynucleotides, releasing free uracil.. Excises uracil residues from the DNA which can arise as a result of misincorporation of dUMP residues by DNA polymerase or due to deamination of cytosine. This Pectobacterium carotovorum subsp. carotovorum (strain PC1) protein is Uracil-DNA glycosylase.